Reading from the N-terminus, the 1405-residue chain is MRPFLDDAKRRVDRKLSARRQSLSASRFLPSALPDRLKDNHDAQVDFTAPPGGSGSREGHLQYMQQSIFGMIAAVGSRSDFHARFDESSDSDGETGQRPRKESSVRKGTSVSVNTSSLDPSQRSSSQTDGNSEKDLGTRGRRHRRTISDHKLLRPFMSNSKHEPDPSTGDEMPTVSPPSRPRSATPRAAPILSRMVEAQAQFDLKASSTERSQSSLNETGAKGPRDASVSPLSTRLMDMFGFDKPEKVLVEYACSLLQSMLLQGYMYVTEGHICFYAYLPKKSTVAIKSGYLHKRGRKNPKYSRYWFSLKGDVLSYYADPSNLYFPSGHVDLRYGISASLGDPKEKGREPRDFQVTTDQRTYYFRADSAMSAKEWVKALQKVIFRTHNEGESVKISFPIESIIDIEESPMVDFAETFKIRVIEDDDSYAIDEYFFTFFNSGREAFEFLKILINDQSLKISSQHLSPQPDRSPRSDRTRKSRNRWSLTSGTSRAETQRKRSASTSHMSLAHDIVKSSPATRHQDSSDSILNSFEQATESSAAWQSITDAAESASQILNRSDVFQSPTIYGLDRRPSGRERRGRRNSDETARSPSTRVNVGTGQQIDELDRRTDGNTSGREARDTTSESDQYTQDPTKSFSGAPSLNELVKAGVYPLQRAAGLAEYLRTRSKQMSNLLASESMGYIEKVSGMWTGGRKHYGEAEDVLPDDQDVDPEDKEDGCNYGDRFRAHFALPPTEKLQATYFAYLHRVLPLYGKIYVSQKKLCFRSLIPGTRTKMILPLRDIENVEKEKGFRFGYHGLVIIIRGHEELFFEFRTSDARDDCAVTLHQHLEAVKFMAESGLLAEQEQNESEAAMTEHRMLQEARYYDYGENDLRPLNESSELHPIFDDPRASIVNFKPAESLRITCLTIGSRGDVQPYIALCKGLLAEGHRPKIATHAEFEPWVRKHGIDFAPVEGDPAELMRICVENGMFTYSFLKEASQKFRGWIDDLLSSAWASCQDSDLLIESPSAMAGIHIAEALRIPYFRAFTMPWSRTRAYPHAFAVPEHRMGGAYNYITYVMFDNVFWKAIAGQVNRWRKNELGLKATTLDKMQPNKVPFLYNYSPSVVPPPLDYPDWIRITGYWFLNEGSDWTPPTALSEFIHRAREDGKKIVYIGFGSIVVSDPSALTKTVIESVLKADVRCILSKGWSDRLGDPASAKPEVPLPSEIHQIQAAPHDWLFSHIDAAVHHGGAGTTGASLRAGVPTIIKPFFGDQFFFGSRVEDLGVGICMKKLNVSVFSRALWEATHSERMIIRAQDLGARIRSEDGVATAIQAIYRDLEYAKTLARQRSIASSTPFSPTPSAKTAAEQDADDDVEDSEEWTFVGDDTDVEMSRRLRDRAISDADMLPDRLLANSVPGDSGPGRN.

Composition is skewed to basic and acidic residues over residues 1–16 (MRPFLDDAKRRVDRKL) and 95–105 (TGQRPRKESSV). Disordered stretches follow at residues 1–27 (MRPFLDDAKRRVDRKLSARRQSLSASR), 83–186 (ARFD…SATP), and 203–230 (DLKASSTERSQSSLNETGAKGPRDASVS). Residues 106–115 (RKGTSVSVNT) are compositionally biased toward polar residues. The segment covering 116 to 126 (SSLDPSQRSSS) has biased composition (low complexity). Positions 206–218 (ASSTERSQSSLNE) are enriched in polar residues. A GRAM 1 domain is found at 246–285 (EKVLVEYACSLLQSMLLQGYMYVTEGHICFYAYLPKKSTV). The 100-residue stretch at 285-384 (VAIKSGYLHK…WVKALQKVIF (100 aa)) folds into the PH domain. 2 disordered regions span residues 461–526 (SQHL…DSSD) and 566–642 (TIYG…SGAP). Residues 483 to 493 (RWSLTSGTSRA) show a composition bias toward polar residues. Positions 570–589 (LDRRPSGRERRGRRNSDETA) are enriched in basic and acidic residues. Over residues 590–603 (RSPSTRVNVGTGQQ) the composition is skewed to polar residues. Residues 606 to 624 (ELDRRTDGNTSGREARDTT) are compositionally biased toward basic and acidic residues. Polar residues predominate over residues 626-642 (ESDQYTQDPTKSFSGAP). In terms of domain architecture, GRAM 2 spans 724–790 (DRFRAHFALP…RDIENVEKEK (67 aa)). Serine 911, arginine 912, aspartate 914, alanine 1214, histidine 1216, histidine 1229, glycine 1233, threonine 1234, aspartate 1253, and glutamine 1254 together coordinate UDP-alpha-D-glucose. The disordered stretch occupies residues 1330-1367 (SIASSTPFSPTPSAKTAAEQDADDDVEDSEEWTFVGDD). Residues 1332 to 1348 (ASSTPFSPTPSAKTAAE) are compositionally biased toward low complexity. Positions 1349–1367 (QDADDDVEDSEEWTFVGDD) are enriched in acidic residues.

This sequence belongs to the glycosyltransferase 28 family.

The protein localises to the cytoplasm. It localises to the preautophagosomal structure membrane. The enzyme catalyses a sterol + UDP-alpha-D-glucose = a sterol 3-beta-D-glucoside + UDP + H(+). The catalysed reaction is ergosterol + UDP-alpha-D-glucose = ergosteryl 3-beta-D-glucoside + UDP + H(+). Sterol glycosyltransferase responsible for the glycosylation of ergosterol to form ergosterol-glucoside. The protein is Sterol 3-beta-glucosyltransferase of Aspergillus fumigatus (strain ATCC MYA-4609 / CBS 101355 / FGSC A1100 / Af293) (Neosartorya fumigata).